Reading from the N-terminus, the 176-residue chain is Translation initiation factor IF-3 (176 aa).

This sequence belongs to the IF-3 family. As to quaternary structure, monomer.

It is found in the cytoplasm. IF-3 binds to the 30S ribosomal subunit and shifts the equilibrium between 70S ribosomes and their 50S and 30S subunits in favor of the free subunits, thus enhancing the availability of 30S subunits on which protein synthesis initiation begins. The sequence is that of Translation initiation factor IF-3 from Streptococcus equi subsp. zooepidemicus (strain H70).